Reading from the N-terminus, the 239-residue chain is Ribonuclease HII (239 aa).

Residues 30–221 (GPVAGVDEVG…VRRVATRSNG (192 aa)) enclose the RNase H type-2 domain. 3 residues coordinate a divalent metal cation: D36, E37, and D130. Positions 217–239 (TRSNGAATAEREADPPQERDGTG) are disordered. Positions 225 to 239 (AEREADPPQERDGTG) are enriched in basic and acidic residues.

It belongs to the RNase HII family. The cofactor is Mn(2+). Mg(2+) is required as a cofactor.

It localises to the cytoplasm. The enzyme catalyses Endonucleolytic cleavage to 5'-phosphomonoester.. Its function is as follows. Endonuclease that specifically degrades the RNA of RNA-DNA hybrids. The polypeptide is Ribonuclease HII (Mycobacterium ulcerans (strain Agy99)).